A 341-amino-acid polypeptide reads, in one-letter code: Phosphoribosylaminoimidazole-succinocarboxamide synthase, chloroplastic (341 aa).

Belongs to the SAICAR synthetase family.

It is found in the plastid. The protein resides in the chloroplast. It carries out the reaction 5-amino-1-(5-phospho-D-ribosyl)imidazole-4-carboxylate + L-aspartate + ATP = (2S)-2-[5-amino-1-(5-phospho-beta-D-ribosyl)imidazole-4-carboxamido]succinate + ADP + phosphate + 2 H(+). It functions in the pathway purine metabolism; IMP biosynthesis via de novo pathway; 5-amino-1-(5-phospho-D-ribosyl)imidazole-4-carboxamide from 5-amino-1-(5-phospho-D-ribosyl)imidazole-4-carboxylate: step 1/2. This chain is Phosphoribosylaminoimidazole-succinocarboxamide synthase, chloroplastic (PUR7), found in Vigna aconitifolia (Moth bean).